A 170-amino-acid chain; its full sequence is Bacilliredoxin SRU_1493 (170 aa).

Residues 140-170 (CGDEEPPADAPSRPDPSSSGEGLPSTFQSIT) are disordered.

It belongs to the bacilliredoxin family.

This chain is Bacilliredoxin SRU_1493, found in Salinibacter ruber (strain DSM 13855 / M31).